The sequence spans 90 residues: UPF0237 protein MK1213 (90 aa).

An ACT domain is found at 5 to 79 (VVTVIGADRP…EELGVDVIVQ (75 aa)).

Belongs to the UPF0237 family.

The protein is UPF0237 protein MK1213 of Methanopyrus kandleri (strain AV19 / DSM 6324 / JCM 9639 / NBRC 100938).